The primary structure comprises 306 residues: OVARIAN TUMOR DOMAIN-containing deubiquitinating enzyme 1 (306 aa).

In terms of domain architecture, OTU spans 81-295; the sequence is IGIRRTRGDG…PGHYDILYPK (215 aa). Aspartate 89 is an active-site residue. Catalysis depends on cysteine 92, which acts as the Nucleophile. Residues histidine 259 and histidine 288 contribute to the active site.

This sequence belongs to the peptidase C65 family.

The catalysed reaction is Thiol-dependent hydrolysis of ester, thioester, amide, peptide and isopeptide bonds formed by the C-terminal Gly of ubiquitin (a 76-residue protein attached to proteins as an intracellular targeting signal).. Cleavage activities for 'Lys-48'- and 'Lys-63'-linked ubiquitin (UB) tetramers is inhibited by UB aldehyde and N-ethylmaleimide but not by the metalloprotease inhibitors 1,10-phenanthroline and EDTA, and the serine protease inhibitor phenylmethylsulfonyl fluoride. In terms of biological role, hydrolase that can remove conjugated ubiquitin from proteins in vitro and may therefore play an important regulatory role at the level of protein turnover by preventing degradation. Cysteine protease with a preference for Met-1 and 'Lys-48' over 'Lys-63'-linked ubiquitin (UB) tetramers (e.g. Ub2, Ub3 and Ub4) as substrates. In Arabidopsis thaliana (Mouse-ear cress), this protein is OVARIAN TUMOR DOMAIN-containing deubiquitinating enzyme 1.